The sequence spans 520 residues: RING-type E3 ubiquitin-protein ligase PPIL2 (520 aa).

Residues 35 to 108 enclose the U-box domain; that stretch reads RRLPFDHCSL…GKYHCPVLFT (74 aa). Positions 197 to 217 form a coiled coil; sequence LKNTNAETRETLQELYKEFKG. A Glycyl lysine isopeptide (Lys-Gly) (interchain with G-Cter in SUMO2) cross-link involves residue Lys-216. The PPIase cyclophilin-type domain maps to 278–433; sequence KKGYVRLHTN…EEIRIDATTV (156 aa). The disordered stretch occupies residues 456 to 520; that stretch reads APETKVKSSQ…SRGFGDFSSW (65 aa). Over residues 463 to 474 the composition is skewed to low complexity; sequence SSQPQAGSQGPQ. A Phosphoserine modification is found at Ser-470. Position 482 is an N6-acetyllysine (Lys-482).

It belongs to the cyclophilin-type PPIase family. PPIL2 subfamily. In terms of assembly, component of the minor spliceosome, which splices U12-type introns. Within this complex, interacts with PRPF8/PRP8, EFTUD2/SNU114 and PLRG1. Interacts with isoform 2 of BSG. Interacts (via the PPIase cyclophilin-type domain) with CRNKL1; they may form a trimeric complex with HSP90. Highest expression in thymus, pancreas and testis. Also detected in heart, placenta, lung, liver, skeletal muscle, kidney, spleen, prostate, ovary, small intestine and colon. Poorly detected in brain and leukocytes. Strong protein expression in lymph node (cortical, paracortical and medullar regions), thyroid (follicular epithelial cells), testis (developing spermatozoa), stomach (cells lining the gastric pit), pancreas, kidney (proximal and distal-tubule cells and collecting duct cells but not in glomeruli), endometrium and colon (goblet cells). Moderate protein expression in spleen, prostate (epithelium and squamous cell carcinomas), placenta and adrenal gland. Weak protein expression in liver, heart, breast, ovary, and lung. No protein expression in brain and bladder. High protein expression in most lymphomas and melanomas.

It is found in the nucleus. It carries out the reaction S-ubiquitinyl-[E2 ubiquitin-conjugating enzyme]-L-cysteine + [acceptor protein]-L-lysine = [E2 ubiquitin-conjugating enzyme]-L-cysteine + N(6)-ubiquitinyl-[acceptor protein]-L-lysine.. It functions in the pathway protein modification; protein ubiquitination. Functionally, has a ubiquitin-protein ligase activity acting as an E3 ubiquitin protein ligase or as an ubiquitin-ubiquitin ligase promoting elongation of ubiquitin chains on substrates. By mediating 'Lys-48'-linked polyubiquitination of proteins could target them for proteasomal degradation. May also function as a chaperone, playing a role in transport to the cell membrane of BSG/Basigin for instance. Probable inactive PPIase with no peptidyl-prolyl cis-trans isomerase activity. As a component of the minor spliceosome, involved in the splicing of U12-type introns in pre-mRNAs. The protein is RING-type E3 ubiquitin-protein ligase PPIL2 of Homo sapiens (Human).